The following is a 460-amino-acid chain: Orexin receptor type 2 (460 aa).

Residues 1 to 54 (MSSTKLEDSLPRRNWSSASELNETQEPFLNPTDYDDEEFLRYLWREYLHPKEYE) lie on the Extracellular side of the membrane. N-linked (GlcNAc...) asparagine glycosylation is found at Asn14 and Asn22. A required for response to orexin-A region spans residues 33-49 (DYDDEEFLRYLWREYLH). The helical transmembrane segment at 55 to 75 (WVLIAGYIIVFVVALIGNVLV) threads the bilayer. Residues 76–88 (CVAVWKNHHMRTV) lie on the Cytoplasmic side of the membrane. Residues 89-110 (TNYFIVNLSLADVLVTITCLPA) form a helical membrane-spanning segment. The Extracellular portion of the chain corresponds to 111–127 (TLVVDITETWFFGQSLC). The cysteines at positions 127 and 210 are disulfide-linked. A helical membrane pass occupies residues 128–150 (KVIPYLQTVSVSVSVLTLSCIAL). The Cytoplasmic portion of the chain corresponds to 151–170 (DRWYAICHPLMFKSTAKRAR). A helical transmembrane segment spans residues 171 to 191 (NSIVVIWIVSCIIMIPQAIVM). Residues 192–222 (ERSSMLPGLANKTTLFTVCDERWGGEVYPKM) are Extracellular-facing. Asn202 carries an N-linked (GlcNAc...) asparagine glycan. A helical membrane pass occupies residues 223-243 (YHICFFLVTYMAPLCLMVLAY). Residues 244-304 (LQIFRKLWCR…QIRARRKTAR (61 aa)) are Cytoplasmic-facing. A helical transmembrane segment spans residues 305-326 (MLMVVLLVFAICYLPISILNVL). Over 327-342 (KRVFGMFTHTEDRETV) the chain is Extracellular. The chain crosses the membrane as a helical span at residues 343-366 (YAWFTFSHWLVYANSAANPIIYNF). Over 367-460 (LSGKFREEFK…SSLLSTWLEV (94 aa)) the chain is Cytoplasmic.

Belongs to the G-protein coupled receptor 1 family. Expressed in the brain in the cerebral cortex, septal nuclei, hippocampus, medial thalamic groups, dorsal and median raphe nuclei, and many hypothalamic nuclei including the tuberomammillary nucleus, dorsomedial hypothalamus, paraventricular hypothalamic nucleus, and ventral premammillary nucleus. Not detected in the spleen, lung, liver, skeletal muscle, kidney and testis. Orexin receptor mRNA expression has also been reported in the adrenal gland, enteric nervous system, and pancreas.

The protein resides in the cell membrane. Nonselective, high-affinity receptor for both orexin-A and orexin-B neuropeptides. Triggers an increase in cytoplasmic Ca(2+) levels in response to orexin-A binding. This chain is Orexin receptor type 2 (Hcrtr2), found in Rattus norvegicus (Rat).